The sequence spans 715 residues: Fatty acid oxidation complex subunit alpha (715 aa).

Positions 1–190 (MTTTSAFMLS…KAGLVDDVVP (190 aa)) are enoyl-CoA hydratase. The interval 306–714 (GPLNSVGILG…FWTNGETDQG (409 aa)) is 3-hydroxyacyl-CoA dehydrogenase.

This sequence in the N-terminal section; belongs to the enoyl-CoA hydratase/isomerase family. The protein in the central section; belongs to the 3-hydroxyacyl-CoA dehydrogenase family. Heterotetramer of two alpha chains (FadJ) and two beta chains (FadI).

Its subcellular location is the cytoplasm. It catalyses the reaction a (3S)-3-hydroxyacyl-CoA = a (2E)-enoyl-CoA + H2O. The catalysed reaction is a 4-saturated-(3S)-3-hydroxyacyl-CoA = a (3E)-enoyl-CoA + H2O. The enzyme catalyses a (3S)-3-hydroxyacyl-CoA + NAD(+) = a 3-oxoacyl-CoA + NADH + H(+). It carries out the reaction (3S)-3-hydroxybutanoyl-CoA = (3R)-3-hydroxybutanoyl-CoA. It participates in lipid metabolism; fatty acid beta-oxidation. In terms of biological role, catalyzes the formation of a hydroxyacyl-CoA by addition of water on enoyl-CoA. Also exhibits 3-hydroxyacyl-CoA epimerase and 3-hydroxyacyl-CoA dehydrogenase activities. The chain is Fatty acid oxidation complex subunit alpha from Salmonella typhi.